Consider the following 320-residue polypeptide: Aspartate carbamoyltransferase catalytic subunit (320 aa).

The carbamoyl phosphate site is built by Arg-65 and Thr-66. Lys-93 provides a ligand contact to L-aspartate. Residues Arg-115, His-143, and Gln-146 each contribute to the carbamoyl phosphate site. L-aspartate-binding residues include Arg-176 and Arg-230. Residues Gly-271 and Pro-272 each contribute to the carbamoyl phosphate site.

The protein belongs to the aspartate/ornithine carbamoyltransferase superfamily. ATCase family. As to quaternary structure, heterododecamer (2C3:3R2) of six catalytic PyrB chains organized as two trimers (C3), and six regulatory PyrI chains organized as three dimers (R2).

It carries out the reaction carbamoyl phosphate + L-aspartate = N-carbamoyl-L-aspartate + phosphate + H(+). It functions in the pathway pyrimidine metabolism; UMP biosynthesis via de novo pathway; (S)-dihydroorotate from bicarbonate: step 2/3. Its function is as follows. Catalyzes the condensation of carbamoyl phosphate and aspartate to form carbamoyl aspartate and inorganic phosphate, the committed step in the de novo pyrimidine nucleotide biosynthesis pathway. This chain is Aspartate carbamoyltransferase catalytic subunit, found in Maricaulis maris (strain MCS10) (Caulobacter maris).